Here is a 254-residue protein sequence, read N- to C-terminus: Guanylate kinase (254 aa).

The region spanning 64–243 is the Guanylate kinase-like domain; sequence KHLVVLAGPT…AAREVVDLMM (180 aa). 71–78 contributes to the ATP binding site; that stretch reads GPTAVGKG.

Belongs to the guanylate kinase family.

The protein resides in the cytoplasm. The catalysed reaction is GMP + ATP = GDP + ADP. In terms of biological role, essential for recycling GMP and indirectly, cGMP. In Leifsonia xyli subsp. xyli (strain CTCB07), this protein is Guanylate kinase.